Reading from the N-terminus, the 631-residue chain is ATP-dependent zinc metalloprotease FtsH (631 aa).

At 1–2 (MK) the chain is on the stromal side. A helical membrane pass occupies residues 3 to 23 (ISWKNILLTLIPLGLISFLVW). Over 24-118 (QGFNNTTNPQ…AHATNDSTPA (95 aa)) the chain is Lumenal. A helical transmembrane segment spans residues 119–139 (WSLIGNLIFPILLIAGLAFLF). Residues 140–631 (RRSSNLPGGP…IDYKSQLKST (492 aa)) lie on the Stromal side of the membrane. 213-220 (GPPGTGKT) serves as a coordination point for ATP. H434 lines the Zn(2+) pocket. E435 is an active-site residue. Zn(2+) contacts are provided by H438 and D512.

In the central section; belongs to the AAA ATPase family. It in the C-terminal section; belongs to the peptidase M41 family. Homohexamer. Zn(2+) serves as cofactor.

It localises to the plastid. It is found in the chloroplast thylakoid membrane. Its function is as follows. Acts as a processive, ATP-dependent zinc metallopeptidase. In Guillardia theta (Cryptophyte), this protein is ATP-dependent zinc metalloprotease FtsH.